A 5412-amino-acid chain; its full sequence is Mucin-4 (5412 aa).

The N-terminal stretch at 1–28 is a signal peptide; that stretch reads MKGARWRRVPWVSLSCLCLCLLPHVVPG. 2 disordered regions span residues 40 to 87 and 142 to 249; these read TAAP…TTSK and TSTD…ATSS. The interval 43–4241 is variable number of tandem repeats (VNTR); that stretch reads PVTSTGSTTA…SVSTGHATPL (4199 aa). Residues 142-163 are compositionally biased toward low complexity; sequence TSTDSTLGNTEETSTAGTESST. 2 O-linked (GalNAc...) threonine glycosylation sites follow: threonine 154 and threonine 156. Positions 164–199 are enriched in polar residues; it reads PVTSAVSITAGQEGQSRTTSWRTSIQDTSASSQNHW. Residues 200–223 are compositionally biased toward low complexity; sequence TRSTQTTRESQTSTLTHRTTSTPS. Polar residues predominate over residues 224-249; that stretch reads FSPSVHNVTGTVSQKTSPSGETATSS. A glycan (N-linked (GlcNAc...) asparagine) is linked at asparagine 230. Threonine 234 carries an O-linked (GalNAc...) threonine glycan. N-linked (GlcNAc...) asparagine glycosylation occurs at asparagine 255. Polar residues-rich tracts occupy residues 267–285, 306–328, and 358–367; these read TTSTGSTLGNPGETSSVPV, SPATFSRTSTQDTTAFSKNHQTQ, and GFNPSGTVSQ. Disordered regions lie at residues 267–286, 303–328, 353–383, 438–473, 488–580, 592–853, 868–963, 983–1864, 1878–2078, 2111–2220, 2232–2814, 2837–3306, 3320–3580, 3592–3644, 3656–3756, and 3769–4223; these read TTSTGSTLGNPGETSSVPVT, EGQSPATFSRTSTQDTTAFSKNHQTQ, LSSPSGFNPSGTVSQETFPSGETTTSSPSSV, LSPSSLPPKISTAFHTQQSEGAETTGRPHERSSFSP, WPSS…ALLS, TATS…ASAS, VPGT…SGSG, SSAS…DASS, ASSV…TGHA, TALH…ASTG, SAST…TGHA, IPSS…SSVS, SAST…VSTG, SVST…VSTG, SVST…ASTG, and VSTG…GHAT. O-linked (GalNAc...) threonine glycosylation is found at threonine 364, threonine 369, and threonine 376. Positions 368 to 383 are enriched in low complexity; the sequence is ETFPSGETTTSSPSSV. 3 stretches are compositionally biased toward polar residues: residues 450–459, 488–526, and 546–557; these read AFHTQQSEGA, WPSSFSSKGHTTWSQTELPSTSTGAATRLVTGNPSTGTA, and TTYSSHSTTLPK. 2 stretches are compositionally biased toward low complexity: residues 558 to 577 and 615 to 627; these read TTGAGAQTQWTQETGTTGEA and STNHSTIHSTSTS. N-linked (GlcNAc...) asparagine glycosylation occurs at asparagine 617. Residues threonine 620, threonine 666, and threonine 688 are each glycosylated (O-linked (GalNAc...) threonine). Polar residues predominate over residues 628–677; sequence PQESPAVSQRGHTQAPQTTQESQTTRSVSPMTDTKTVTTPGSSFTASGHS. The segment covering 705 to 717 has biased composition (low complexity); that stretch reads TTQAPTTALQAAP. Polar residues predominate over residues 729–746; that stretch reads GTSLSKTGALTLANSVVS. Threonine 747 is a glycosylation site (O-linked (GalNAc...) threonine). The segment covering 756-771 has biased composition (low complexity); sequence TSASASTSPDTAAAMT. Positions 772-789 are enriched in polar residues; the sequence is HTHQAESTEASGQTQTSE. A compositionally biased stretch (low complexity) spans 790 to 828; it reads PASSGSRTTSAGTATPSSSGASGTTPSGSEGISTSGETT. Threonine 797, threonine 798, threonine 802, threonine 804, threonine 813, and threonine 814 each carry an O-linked (GalNAc...) threonine glycan. The segment covering 829–852 has biased composition (polar residues); sequence RFSSNPSRDSHTTQSTTELLSASA. O-linked (GalNAc...) threonine glycans are attached at residues threonine 881, threonine 886, and threonine 892. Residues 885-903 show a composition bias toward low complexity; it reads PTGQSSPTSPSASPQETAA. Positions 907 to 928 are enriched in polar residues; sequence MAQTQRTRTSRGSDTISLASQA. Positions 929–950 are enriched in low complexity; the sequence is TDTFSTVPPTPPSITSTGLTSP. Residues threonine 931, threonine 934, threonine 938, threonine 943, threonine 945, threonine 948, threonine 952, threonine 954, threonine 1003, threonine 1007, threonine 1012, threonine 1019, threonine 1022, threonine 1023, threonine 1028, threonine 1030, threonine 1035, threonine 1039, threonine 1044, threonine 1051, threonine 1055, threonine 1060, threonine 1062, threonine 1067, threonine 1071, threonine 1076, threonine 1083, threonine 1086, threonine 1087, threonine 1092, threonine 1094, threonine 1099, threonine 1103, threonine 1108, threonine 1110, threonine 1115, threonine 1118, threonine 1119, threonine 1124, threonine 1126, threonine 1131, threonine 1135, threonine 1172, threonine 1179, threonine 1182, threonine 1183, threonine 1188, threonine 1195, threonine 1199, threonine 1204, threonine 1236, threonine 1243, threonine 1246, and threonine 1247 are each glycosylated (O-linked (GalNAc...) threonine). The segment covering 951–963 has biased composition (polar residues); it reads QTETHTLSPSGSG. Residues 1007-1024 are compositionally biased toward low complexity; that stretch reads TPLPVTSPSSVSTGHTTP. The span at 1028–1054 shows a compositional bias: polar residues; that stretch reads TDTSSESTGHVTPLPVTSFSSASTGDS. Polar residues predominate over residues 1060-1086; sequence TDTSSASTGHVTPLPVTSLSSASTGDT. The span at 1092-1118 shows a compositional bias: polar residues; it reads TDTSSASTGHATSLPVTDTSSVSTGHT. Composition is skewed to polar residues over residues 1124-1150 and 1157-1197; these read TDTSSASTGHATSLPVTDTSSVSTGHT and DASS…STGH. 2 stretches are compositionally biased toward polar residues: residues 1204–1213 and 1221–1246; these read TDTSSASTGH and DASSVSTDHATSLPVTIPSAASTGHT. The span at 1252-1262 shows a compositional bias: polar residues; it reads TDTSSASTGQA. Low complexity predominate over residues 1263 to 1279; sequence TSLLVTDTSSVSTGDTT. 17 O-linked (GalNAc...) threonine glycosylation sites follow: threonine 1278, threonine 1279, threonine 1284, threonine 1286, threonine 1291, threonine 1295, threonine 1300, threonine 1307, threonine 1311, threonine 1316, threonine 1323, threonine 1326, threonine 1332, threonine 1339, threonine 1342, threonine 1343, and threonine 1348. The segment covering 1281–1325 has biased composition (polar residues); sequence LPVTSTSSASTGHVTPLHVTSPSSASTGHATPLPVTSLSSASTGD. Polar residues predominate over residues 1332 to 1342; sequence TSPSSASTGDT. Composition is skewed to polar residues over residues 1349-1358 and 1365-1405; these read DASSVSTGHT and DASS…STGH. O-linked (GalNAc...) threonine glycans are attached at residues threonine 1380, threonine 1387, threonine 1390, threonine 1391, threonine 1396, threonine 1403, threonine 1407, threonine 1412, threonine 1444, threonine 1451, threonine 1454, and threonine 1455. Polar residues-rich tracts occupy residues 1412–1421 and 1429–1454; these read TDTSSASTGH and DASSVSTDHATSLPVTIPSAASTGHT. Polar residues predominate over residues 1460 to 1470; the sequence is TDTSSASTGQA. Over residues 1471–1487 the composition is skewed to low complexity; the sequence is TSLLVTDTSSVSTGDTT. O-linked (GalNAc...) threonine glycans are attached at residues threonine 1486, threonine 1487, threonine 1492, threonine 1494, threonine 1499, threonine 1503, threonine 1508, threonine 1515, threonine 1519, threonine 1524, threonine 1531, threonine 1534, threonine 1540, threonine 1547, threonine 1550, threonine 1551, threonine 1556, threonine 1563, threonine 1566, threonine 1567, threonine 1572, threonine 1579, threonine 1582, threonine 1583, threonine 1588, threonine 1590, threonine 1598, threonine 1599, threonine 1604, threonine 1611, threonine 1614, threonine 1615, threonine 1620, threonine 1622, threonine 1627, and threonine 1630. Over residues 1489 to 1533 the composition is skewed to polar residues; the sequence is LPVTSTSSASTGHVTPLHVTSPSSASTGHATPLPVTSLSSASTGD. Residues 1540 to 1550 show a composition bias toward polar residues; it reads TSPSSASTGDT. Over residues 1557–1582 the composition is skewed to polar residues; sequence DASSVSTGHTTPLPVTSPSSASTGHT. The span at 1588–1614 shows a compositional bias: polar residues; it reads TDTSSASKGDTTPLPVTSPSSASTGHT. Low complexity predominate over residues 1620-1631; sequence TDTSSASTGDTT. Residues 1633 to 1661 show a composition bias toward polar residues; the sequence is LPVTNASSLSTGHATPLHVTSPSSASTGH. N-linked (GlcNAc...) asparagine glycosylation occurs at asparagine 1637. Threonine 1659, threonine 1663, threonine 1668, threonine 1670, threonine 1675, threonine 1679, threonine 1716, threonine 1723, threonine 1726, threonine 1727, threonine 1732, threonine 1764, threonine 1766, threonine 1812, threonine 1819, threonine 1822, threonine 1823, threonine 1828, threonine 1835, threonine 1838, threonine 1839, threonine 1844, threonine 1854, and threonine 1855 each carry an O-linked (GalNAc...) threonine glycan. Positions 1668 to 1679 are enriched in low complexity; that stretch reads TSTSSASTGHAT. 3 stretches are compositionally biased toward polar residues: residues 1701 to 1741, 1749 to 1773, and 1812 to 1822; these read DVSS…STGH, DASSASTGQATPLPVTDTSSVSTAH, and TSPSSASTGDT. Positions 1828 to 1840 are enriched in low complexity; the sequence is TDASSASTGDTTS. Composition is skewed to polar residues over residues 1841–1864, 1892–1902, and 1909–1950; these read LPVTIPSSASSGHTTSLPVTDASS, TDTNSASTGDT, and DASS…SGHT. O-linked (GalNAc...) threonine glycosylation is found at threonine 1931, threonine 1934, threonine 1935, threonine 1940, threonine 1950, threonine 1951, threonine 1956, threonine 1963, threonine 1995, threonine 1999, threonine 2004, threonine 2006, threonine 2015, threonine 2020, threonine 2027, threonine 2030, threonine 2031, threonine 2036, threonine 2038, threonine 2047, threonine 2052, threonine 2062, threonine 2063, threonine 2132, threonine 2137, threonine 2139, threonine 2142, threonine 2143, threonine 2148, threonine 2150, threonine 2155, threonine 2159, threonine 2164, threonine 2180, threonine 2182, threonine 2187, threonine 2191, threonine 2196, threonine 2198, threonine 2203, threonine 2207, threonine 2244, threonine 2254, and threonine 2255. Polar residues predominate over residues 1957-1981; the sequence is DASSVPTGHATSLPVTDASSVSTGH. A compositionally biased stretch (polar residues) spans 2004 to 2030; that stretch reads TDTSSVSTGQATPLPVTSLSSASTGDT. The span at 2036–2077 shows a compositional bias: polar residues; the sequence is TDTSSASTGQDTPLPVTSLSSVSTGDTTPLPVTNPSSASTGH. Residues 2125 to 2146 show a composition bias toward low complexity; the sequence is DTTPLPVTSPSSTSTGDTTPLP. The segment covering 2148–2189 has biased composition (polar residues); the sequence is TETSSVSTGHATSLPVTDTSSASTGHATSLPVTDTSSASTGH. 2 stretches are compositionally biased toward polar residues: residues 2196 to 2219 and 2232 to 2254; these read TDTSSASTGQATPLPVTSPSSAST and SASTGQATPLPVTSLSSASTGDT. The segment covering 2261–2270 has biased composition (polar residues); the sequence is DASSVSTGHA. Low complexity predominate over residues 2271-2283; the sequence is TSLPVTSLSSVST. 26 O-linked (GalNAc...) threonine glycosylation sites follow: threonine 2283, threonine 2286, threonine 2287, threonine 2292, threonine 2299, threonine 2303, threonine 2308, threonine 2324, threonine 2331, threonine 2334, threonine 2335, threonine 2340, threonine 2347, threonine 2351, threonine 2356, threonine 2363, threonine 2366, threonine 2367, threonine 2372, threonine 2382, threonine 2383, threonine 2388, threonine 2395, threonine 2398, threonine 2399, and threonine 2406. A compositionally biased stretch (polar residues) spans 2284–2301; that stretch reads GDTTPLPVTSPSSASTGH. Residues 2309–2349 show a composition bias toward polar residues; it reads DASSASTGHATPLPVTSLSSASTGDTTPLPVTSPSSASTGH. Residues 2366 to 2399 show a composition bias toward low complexity; that stretch reads TTPLPVTSSSSASSGHTTPLPVTDASSASTGDTT. 2 stretches are compositionally biased toward polar residues: residues 2404 to 2413 and 2421 to 2445; these read TDTSSASTGH and GLSSASTGDTTRLPVTNVSSASTGH. N-linked (GlcNAc...) asparagine glycosylation occurs at asparagine 2437. O-linked (GalNAc...) threonine glycans are attached at residues threonine 2452, threonine 2454, threonine 2459, threonine 2462, threonine 2463, threonine 2468, threonine 2500, threonine 2507, threonine 2510, threonine 2511, threonine 2516, threonine 2518, threonine 2523, and threonine 2526. The segment covering 2452-2471 has biased composition (low complexity); it reads TSTSSASTGDTTPLPGTDTS. Over residues 2485–2510 the composition is skewed to polar residues; that stretch reads DASSVSTGDTTRLPVTSPSSASTGHT. A compositionally biased stretch (polar residues) spans 2517 to 2573; the sequence is DTPSASTGDTTPLPVTNASSLSTRHATSLHVTSPSSASTGHATSLPVTDTSAASTGH. A glycan (N-linked (GlcNAc...) asparagine) is linked at asparagine 2533. O-linked (GalNAc...) threonine glycosylation is found at threonine 2564, threonine 2566, threonine 2571, threonine 2575, threonine 2580, threonine 2582, threonine 2587, threonine 2590, threonine 2591, threonine 2596, threonine 2598, threonine 2619, threonine 2622, threonine 2623, threonine 2628, threonine 2660, threonine 2667, threonine 2670, threonine 2671, threonine 2676, threonine 2683, threonine 2687, threonine 2692, and threonine 2694. Positions 2580 to 2591 are enriched in low complexity; the sequence is TSTSSASTGDTT. Polar residues-rich tracts occupy residues 2597 to 2637 and 2645 to 2691; these read DTYS…STGH and DASS…SLPV. Residues 2692-2704 show a composition bias toward low complexity; that stretch reads TDTSSASTGDTTS. Residues 2705–2723 are compositionally biased toward polar residues; the sequence is LPVTDTSSAYTGDTTSLPV. The segment covering 2724 to 2735 has biased composition (low complexity); sequence TDTSSSSTGDTT. Residues threonine 2740, threonine 2742, threonine 2750, threonine 2751, threonine 2756, threonine 2758, threonine 2763, and threonine 2767 are each glycosylated (O-linked (GalNAc...) threonine). Polar residues predominate over residues 2740–2750; that stretch reads TETSSVSTGDT. Positions 2756–2798 are enriched in polar residues; the sequence is TDTSSASTGHATPLPVTNTSSVSTGHATPLHVTSPSSASTGHT. A glycan (N-linked (GlcNAc...) asparagine) is linked at asparagine 2773. 7 O-linked (GalNAc...) threonine glycosylation sites follow: threonine 2779, threonine 2783, threonine 2788, threonine 2795, threonine 2798, threonine 2799, and threonine 2804. 2 stretches are compositionally biased toward polar residues: residues 2805–2814 and 2837–2846; these read DASSVSTGHA and IPSSASSGHT. O-linked (GalNAc...) threonine glycosylation is found at threonine 2846, threonine 2847, and threonine 2852. Positions 2853–2877 are enriched in polar residues; that stretch reads DASSVSTGHATSLPVTDASSVSTGH. Residues 2895-2907 are compositionally biased toward low complexity; the sequence is TPLPLTSLSSVST. Threonine 2910, threonine 2911, threonine 2916, threonine 2918, threonine 2923, threonine 2927, threonine 2932, threonine 2939, threonine 2942, threonine 2943, threonine 2948, threonine 2950, threonine 2955, threonine 2959, threonine 2966, threonine 2971, and threonine 2975 each carry an O-linked (GalNAc...) threonine glycan. Polar residues predominate over residues 2916–2942; sequence TDTSSASTGQATPLPVTSLSSVSTGDT. The span at 2948 to 2973 shows a compositional bias: polar residues; it reads TDTSSASTGHATSLPVTDTSSASTGH. Composition is skewed to polar residues over residues 2980-2989 and 3009-3037; these read TDTSSASTGH and LPVTDTSSISTGHATPLHVTSPSSASTGH. O-linked (GalNAc...) threonine glycans are attached at residues threonine 3023, threonine 3028, threonine 3035, and threonine 3039. The segment covering 3044–3069 has biased composition (polar residues); sequence TDTSSASTGHANPLHVTSPSSASTGH. O-linked (GalNAc...) threonine glycans are attached at residues threonine 3071, threonine 3076, threonine 3078, threonine 3083, threonine 3087, threonine 3092, threonine 3099, threonine 3102, threonine 3103, threonine 3108, threonine 3115, threonine 3118, threonine 3119, threonine 3124, threonine 3126, threonine 3131, threonine 3135, threonine 3140, threonine 3142, threonine 3147, threonine 3150, threonine 3151, threonine 3156, threonine 3158, threonine 3163, threonine 3167, threonine 3172, threonine 3179, threonine 3182, threonine 3183, threonine 3188, threonine 3220, threonine 3227, threonine 3230, threonine 3231, threonine 3236, threonine 3243, threonine 3247, threonine 3252, and threonine 3254. Residues 3076-3118 are compositionally biased toward polar residues; it reads TDTSSASTGHATPLPVTSLSSVSTGDTTPLPVTSPSSASTGHT. Over residues 3124–3134 the composition is skewed to polar residues; that stretch reads TDTSSASTGQA. Positions 3140 to 3151 are enriched in low complexity; the sequence is TSTSSASTGDTT. Composition is skewed to polar residues over residues 3156–3197 and 3205–3251; these read TDTS…STGH and DASS…SLPV. A compositionally biased stretch (low complexity) spans 3252 to 3264; it reads TDTSSASTGDTTS. Residues 3265-3283 show a composition bias toward polar residues; that stretch reads LPVTDTSSAYTGDTTSLPV. Residues 3284–3295 show a composition bias toward low complexity; that stretch reads TDTSSSSTGDTT. 9 O-linked (GalNAc...) threonine glycosylation sites follow: threonine 3294, threonine 3332, threonine 3339, threonine 3342, threonine 3343, threonine 3348, threonine 3350, threonine 3355, and threonine 3359. Residues 3320–3337 show a composition bias toward polar residues; sequence SASTGHATPLHVTSPSSA. A compositionally biased stretch (low complexity) spans 3338–3356; that stretch reads STGDTTPVPVTDTSSVSTG. 2 stretches are compositionally biased toward polar residues: residues 3365–3374 and 3381–3405; these read GLSSASTGDT and DISSASTGQATPLPVTNTSSVSTGD. N-linked (GlcNAc...) asparagine glycosylation occurs at asparagine 3397. Threonine 3398, threonine 3403, threonine 3406, threonine 3412, threonine 3419, threonine 3423, threonine 3428, threonine 3430, threonine 3435, threonine 3439, and threonine 3444 each carry an O-linked (GalNAc...) threonine glycan. The segment covering 3412–3421 has biased composition (polar residues); sequence TSPSSASTGH. The span at 3428–3471 shows a compositional bias: low complexity; that stretch reads TSTSSASTGHATPVPVTSTSSASTGHTTPLPVTDTSSASTGDTT. Serine 3445 carries an O-linked (GalNAc...) serine glycan. 99 O-linked (GalNAc...) threonine glycosylation sites follow: threonine 3446, threonine 3451, threonine 3454, threonine 3455, threonine 3460, threonine 3462, threonine 3467, threonine 3470, threonine 3471, threonine 3476, threonine 3483, threonine 3486, threonine 3487, threonine 3492, threonine 3499, threonine 3502, threonine 3504, threonine 3508, threonine 3515, threonine 3519, threonine 3524, threonine 3526, threonine 3531, threonine 3535, threonine 3540, threonine 3547, threonine 3550, threonine 3551, threonine 3556, threonine 3567, threonine 3614, threonine 3615, threonine 3622, threonine 3678, threonine 3679, threonine 3686, threonine 3691, threonine 3695, threonine 3700, threonine 3710, threonine 3711, threonine 3716, threonine 3718, threonine 3723, threonine 3727, threonine 3732, threonine 3739, threonine 3743, threonine 3748, threonine 3780, threonine 3787, threonine 3790, threonine 3791, threonine 3796, threonine 3798, threonine 3803, threonine 3807, threonine 3812, threonine 3822, threonine 3823, threonine 3828, threonine 3835, threonine 3839, threonine 3844, threonine 3851, threonine 3854, threonine 3860, threonine 3867, threonine 3871, threonine 3876, threonine 3883, threonine 3886, threonine 3887, threonine 3892, threonine 3894, threonine 3899, threonine 3903, threonine 3935, threonine 3940, threonine 3942, threonine 3947, threonine 3950, threonine 3951, threonine 3956, threonine 3958, threonine 3963, threonine 3967, threonine 3972, threonine 3979, threonine 3983, threonine 3988, threonine 3990, threonine 3995, threonine 3999, threonine 4004, threonine 4006, threonine 4011, threonine 4015, and threonine 4020. A compositionally biased stretch (polar residues) spans 3473–3486; that stretch reads LPVTSPSSASTGHT. Residues 3493–3517 are compositionally biased toward polar residues; it reads IPSSASTGDTSTLPVTGASSASTGH. The segment covering 3524-3550 has biased composition (polar residues); it reads TDTSSVSTGHATPLPVTSLSSVSTGDT. Positions 3557–3580 are enriched in polar residues; the sequence is DASSASTGQATPLPVTSLSSVSTG. Over residues 3604-3615 the composition is skewed to low complexity; the sequence is TDTSSASTGDTT. Positions 3620–3644 are enriched in polar residues; the sequence is TDTSSASTGQATPLPVTSLSSVSTG. Positions 3668–3679 are enriched in low complexity; that stretch reads TDTSSASTGDTT. A compositionally biased stretch (polar residues) spans 3684–3694; it reads TDTSSASTGQA. Residues 3710 to 3728 show a composition bias toward low complexity; it reads TTPLPVTSTSSVSTGHVTP. Polar residues predominate over residues 3730–3741; it reads HVTSPSSASTGH. The span at 3780-3791 shows a compositional bias: low complexity; it reads TDASSASTGDTT. Over residues 3796 to 3822 the composition is skewed to polar residues; the sequence is TDTSSASTGQATPLPVTSLSSVSTGDT. Positions 3860–3869 are enriched in polar residues; sequence TSPSSASTGH. A compositionally biased stretch (polar residues) spans 3877 to 3886; the sequence is GLSSASTGDT. Polar residues predominate over residues 3892–3901; that stretch reads TDTSSASTRH. The segment covering 3940-3951 has biased composition (low complexity); the sequence is TSTSSASTGDTT. The segment covering 3956–3981 has biased composition (polar residues); it reads TDTSSVSTGHATSLPVTSRSSASTGH. Positions 3988 to 3997 are enriched in polar residues; sequence TDTSSVSTGH. The segment covering 3999–4011 has biased composition (low complexity); it reads TPLPVTSTSSVST. Residues 4018 to 4029 are compositionally biased toward polar residues; that stretch reads PVTSPSSASTGH. O-linked (GalNAc...) serine glycans are attached at residues serine 4021, serine 4023, serine 4024, and serine 4026. O-linked (GalNAc...) threonine glycosylation is found at threonine 4027, threonine 4031, and threonine 4036. A compositionally biased stretch (low complexity) spans 4030 to 4047; sequence ATPVPVTSTSSASTGDTT. Residue serine 4037 is glycosylated (O-linked (GalNAc...) serine). O-linked (GalNAc...) threonine glycosylation is found at threonine 4038, threonine 4043, threonine 4046, and threonine 4047. The segment covering 4049–4093 has biased composition (polar residues); that stretch reads LPVTNASSLSTGHATPLHVTSPSSASRGDTSTLPVTDASSASTGH. N-linked (GlcNAc...) asparagine glycosylation is present at asparagine 4053. O-linked (GalNAc...) threonine glycans are attached at residues threonine 4078 and threonine 4084. Residues 4095-4107 are compositionally biased toward low complexity; the sequence is TPLPLTSLSSVST. Residues threonine 4110, threonine 4111, threonine 4116, threonine 4118, threonine 4123, threonine 4127, threonine 4132, threonine 4139, threonine 4142, threonine 4143, threonine 4148, threonine 4158, threonine 4159, threonine 4164, threonine 4171, threonine 4175, threonine 4180, threonine 4182, threonine 4187, threonine 4190, threonine 4191, threonine 4196, threonine 4198, threonine 4203, threonine 4207, threonine 4212, threonine 4214, threonine 4219, threonine 4223, and threonine 4239 are each glycosylated (O-linked (GalNAc...) threonine). Positions 4116 to 4142 are enriched in polar residues; sequence TDTSSASTGQATPLPVTSLSSVSTGDT. The segment covering 4149–4173 has biased composition (polar residues); that stretch reads IPSSASSGHTTSLPVTDASSVSTGH. Residues 4180–4191 show a composition bias toward low complexity; sequence TSTSSASTGDTT. Residues 4196–4205 show a composition bias toward polar residues; sequence TDTSSASTGH. Over residues 4212–4223 the composition is skewed to polar residues; the sequence is TDTSSASTGHAT. Over residues 4242–4254 the composition is skewed to low complexity; the sequence is AVSSATSASTVSS. The segment at 4242–4288 is disordered; the sequence is AVSSATSASTVSSDSPLKMETPGMTTPSLKTDGGRRTATSPPPTTSQ. 6 O-linked (GalNAc...) threonine glycosylation sites follow: threonine 4272, threonine 4278, threonine 4280, threonine 4289, threonine 4293, and threonine 4297. The NIDO domain maps to 4397–4552; the sequence is PFWDDADFST…GLQFYRLHRE (156 aa). The AMOP domain occupies 4553–4668; that stretch reads ERPNYRLECL…YLCALYQQRR (116 aa). The region spanning 4680 to 4880 is the VWFD domain; the sequence is QPAWMFGDPH…TWQINGTGLL (201 aa). N-linked (GlcNAc...) asparagine glycans are attached at residues asparagine 4715, asparagine 4768, asparagine 4787, asparagine 4796, asparagine 4831, asparagine 4852, asparagine 4875, asparagine 4902, asparagine 4928, asparagine 4946, asparagine 4982, asparagine 4997, asparagine 5045, asparagine 5052, asparagine 5100, and asparagine 5119. The 40-residue stretch at 5118–5157 folds into the EGF-like 1 domain; sequence QNQSCPVNYCYNQGHCYISQTLGCQPMCTCPPAFTDSRCF. 3 disulfides stabilise this stretch: cysteine 5122–cysteine 5133, cysteine 5127–cysteine 5145, and cysteine 5147–cysteine 5156. Residues asparagine 5185, asparagine 5192, and asparagine 5292 are each glycosylated (N-linked (GlcNAc...) asparagine). Residues 5321–5360 form the EGF-like 2 domain; it reads VSPCSRGYCDHGGQCQHLPSGPRCSCVSFSIYTAWGEHCE. 3 disulfide bridges follow: cysteine 5324–cysteine 5335, cysteine 5329–cysteine 5344, and cysteine 5346–cysteine 5359. The chain crosses the membrane as a helical span at residues 5369–5389; the sequence is FFGIFFGALGGLLLLGVGTFV.

In terms of assembly, a heterodimeric complex, composed of a mucin-4 alpha chain and a cysteine-rich transmembrane mucin-4 beta chain. Mucin-4 beta chain interacts with ERBB2 via the EGF-like domain 1. In nonpolarized cells, associates with ERBB2 and ERBB3. Post-translationally, proteolytically cleaved into 2 chains, mucin-4 alpha chain and mucin-4 beta chain. Highly O-glycosylated. In terms of processing, is predominantly N-glycosylated. In terms of tissue distribution, expressed in the thymus, thyroid, lung, trachea, esophagus, stomach, small intestine, colon, testis, prostate, ovary, uterus, placenta, and mammary and salivary glands. Expressed in carcinomas arising from some of these epithelia, such as lung cancers, squamous cell carcinomas of the upper aerodigestive tract, mammary carcinomas, biliary tract, colon, and cervix cancers. Minimally or not expressed in the normal pancreas or chronic pancreatitis, but is highly expressed in pancreatic tumors and pancreatic tumor cell lines.

It is found in the cell membrane. The protein localises to the secreted. Its function is as follows. Membrane-bound mucin, a family of highly glycosylated proteins that constitute the major component of the mucus, the slimy and viscous secretion covering epithelial surfaces. These glycoproteins play important roles in the protection of the epithelium and are implicated in epithelial renewal and differentiation. Regulates cellular behavior through both anti-adhesive effects on cell-cell and cell-extracellular matrix interactions and its ability to act as an intramembrane ligand for ERBB2. Plays an important role in proliferation and differentiation of epithelial cells by inducing specific phosphorylation of ERBB2. In polarized epithelial cells, segregates ERBB2 and other ERBB receptors and prevents ERBB2 from acting as a coreceptor. The interaction with ERBB2 leads to enhanced expression of CDKN1B. The formation of a MUC4-ERBB2-ERBB3-NRG1 complex leads to down-regulation of CDKN1B, resulting in repression of apoptosis and stimulation of proliferation. Its ability to promote tumor growth may be mainly due to repression of apoptosis as opposed to proliferation. This is Mucin-4 (MUC4) from Homo sapiens (Human).